Consider the following 429-residue polypeptide: tRNA(Ile2) 2-agmatinylcytidine synthetase TiaS (429 aa).

The segment at 403–429 (KPPERPLHPSKSLEPPSTPIHSDTISL) is disordered.

This sequence belongs to the TiaS family.

It localises to the cytoplasm. It carries out the reaction cytidine(34) in tRNA(Ile2) + agmatine + ATP + H2O = 2-agmatinylcytidine(34) in tRNA(Ile2) + AMP + 2 phosphate + 2 H(+). ATP-dependent agmatine transferase that catalyzes the formation of 2-agmatinylcytidine (agm2C) at the wobble position (C34) of tRNA(Ile2), converting the codon specificity from AUG to AUA. The chain is tRNA(Ile2) 2-agmatinylcytidine synthetase TiaS from Hyperthermus butylicus (strain DSM 5456 / JCM 9403 / PLM1-5).